The sequence spans 23 residues: Phallacidin proprotein (23 aa).

Residue Pro-1 is a propeptide. A cross-link (cyclopeptide (Ala-Pro)) is located at residues 2–8; sequence AWLVDCP. A cross-link (2'-cysteinyl-6'-hydroxytryptophan sulfoxide (Trp-Cys)) is located at residues 3 to 7; sequence WLVDC. A propeptide spanning residues 9 to 23 is cleaved from the precursor; that stretch reads CVGDDVNRLLARGEK.

It belongs to the MSDIN fungal toxin family. Processed by the macrocyclase-peptidase enzyme POPB to yield a toxic cyclic heptapeptide. POPB first removes 10 residues from the N-terminus. Conformational trapping of the remaining peptide forces the enzyme to release this intermediate rather than proceed to macrocyclization. The enzyme rebinds the remaining peptide in a different conformation and catalyzes macrocyclization of the N-terminal 7 residues.

Its function is as follows. Major toxin that belongs to the bicyclic heptapeptides called phallotoxins. Although structurally related to amatoxins, phallotoxins have a different mode of action, which is the stabilization of F-actin. Phallotoxins are poisonous when administered parenterally, but not orally because of poor absorption. The polypeptide is Phallacidin proprotein (Amanita fuliginea (East Asian brown death cap)).